The chain runs to 364 residues: Flagellar P-ring protein (364 aa).

The signal sequence occupies residues 1 to 29; it reads MKTIGGKVFRHAAILAACVLPLWCQPALA.

This sequence belongs to the FlgI family. In terms of assembly, the basal body constitutes a major portion of the flagellar organelle and consists of four rings (L,P,S, and M) mounted on a central rod.

The protein resides in the periplasm. It is found in the bacterial flagellum basal body. Functionally, assembles around the rod to form the L-ring and probably protects the motor/basal body from shearing forces during rotation. The sequence is that of Flagellar P-ring protein from Dechloromonas aromatica (strain RCB).